The chain runs to 163 residues: Phosphopantetheine adenylyltransferase (163 aa).

Residue T10 participates in substrate binding. ATP is bound by residues 10–11 (TF) and H18. Residues K42, L75, and R89 each contribute to the substrate site. ATP is bound by residues 90–92 (GVR), E100, and 125–131 (YTYVASS).

Belongs to the bacterial CoaD family. As to quaternary structure, homohexamer. It depends on Mg(2+) as a cofactor.

Its subcellular location is the cytoplasm. It catalyses the reaction (R)-4'-phosphopantetheine + ATP + H(+) = 3'-dephospho-CoA + diphosphate. Its pathway is cofactor biosynthesis; coenzyme A biosynthesis; CoA from (R)-pantothenate: step 4/5. Its function is as follows. Reversibly transfers an adenylyl group from ATP to 4'-phosphopantetheine, yielding dephospho-CoA (dPCoA) and pyrophosphate. The protein is Phosphopantetheine adenylyltransferase of Pelodictyon phaeoclathratiforme (strain DSM 5477 / BU-1).